The following is a 202-amino-acid chain: Imidazoleglycerol-phosphate dehydratase (202 aa).

Belongs to the imidazoleglycerol-phosphate dehydratase family.

Its subcellular location is the cytoplasm. It catalyses the reaction D-erythro-1-(imidazol-4-yl)glycerol 3-phosphate = 3-(imidazol-4-yl)-2-oxopropyl phosphate + H2O. Its pathway is amino-acid biosynthesis; L-histidine biosynthesis; L-histidine from 5-phospho-alpha-D-ribose 1-diphosphate: step 6/9. The protein is Imidazoleglycerol-phosphate dehydratase of Mycolicibacterium gilvum (strain PYR-GCK) (Mycobacterium gilvum (strain PYR-GCK)).